The following is a 68-amino-acid chain: Protein SlyX homolog (68 aa).

This sequence belongs to the SlyX family.

This Brucella anthropi (strain ATCC 49188 / DSM 6882 / CCUG 24695 / JCM 21032 / LMG 3331 / NBRC 15819 / NCTC 12168 / Alc 37) (Ochrobactrum anthropi) protein is Protein SlyX homolog.